The primary structure comprises 91 residues: DNA/RNA-binding protein Alba (91 aa).

Lys-11 is modified (N6-acetyllysine).

The protein belongs to the histone-like Alba family. Post-translationally, acetylated. Acetylation at Lys-11 decreases DNA-binding affinity.

Its subcellular location is the cytoplasm. It localises to the chromosome. In terms of biological role, binds double-stranded DNA tightly but without sequence specificity. Incubation with DNA in vitro gives fibrous structures 10.3 +/- 1.1 nm in thickness (naked DNA is 1.83 +/- 0.37 nm). This protein does not significantly compact DNA. The protein is DNA/RNA-binding protein Alba of Thermococcus kodakarensis (strain ATCC BAA-918 / JCM 12380 / KOD1) (Pyrococcus kodakaraensis (strain KOD1)).